A 204-amino-acid chain; its full sequence is CASP-like protein 3A1 (204 aa).

Topologically, residues 1–39 (MGSIGNGRNGSEVGIQIPAMGNKEVLERPAIPRWPRLGV) are cytoplasmic. Residues 40–60 (VMVATRAVALVMAVLSMALMI) traverse the membrane as a helical segment. The Extracellular segment spans residues 61-88 (SAKQRGSLKIFGIEIPLYANWSFSDSLE). Asparagine 80 carries N-linked (GlcNAc...) asparagine glycosylation. A helical transmembrane segment spans residues 89–109 (YLVGMSAVSAAYCLAQLLLTA). The Cytoplasmic portion of the chain corresponds to 110–124 (HKAVKNAPVVQSRNY). A helical transmembrane segment spans residues 125–145 (AWLLFTGDQIFAYAMMSAGSA). Residues 146-179 (AAAVANLNRTGIRHTALPNFCKPLPRFCDLSAAS) are Extracellular-facing. An N-linked (GlcNAc...) asparagine glycan is attached at asparagine 153. Residues 180 to 200 (IACAFLSCIFLAASAVIDVIW) form a helical membrane-spanning segment. The Cytoplasmic portion of the chain corresponds to 201 to 204 (LSNM).

It belongs to the Casparian strip membrane proteins (CASP) family. As to quaternary structure, homodimer and heterodimers.

Its subcellular location is the cell membrane. In Oryza sativa subsp. indica (Rice), this protein is CASP-like protein 3A1.